The sequence spans 417 residues: Putative F-box protein At4g21240 (417 aa).

Residues 1 to 12 show a composition bias toward acidic residues; that stretch reads MDRREEEEEETG. The disordered stretch occupies residues 1-25; that stretch reads MDRREEEEEETGYGEKGTRNQSKED. Residues 16–25 are compositionally biased toward basic and acidic residues; that stretch reads KGTRNQSKED. The F-box domain maps to 30-76; sequence GKIFELIPLDMIPDILLRLPAKSAVRFRIVSKLWLSITTRPYFIRSF.

The protein is Putative F-box protein At4g21240 of Arabidopsis thaliana (Mouse-ear cress).